We begin with the raw amino-acid sequence, 187 residues long: Ribosome maturation factor RimM (187 aa).

Residues Glu-96–Gly-169 enclose the PRC barrel domain.

Belongs to the RimM family. Binds ribosomal protein uS19.

It localises to the cytoplasm. Functionally, an accessory protein needed during the final step in the assembly of 30S ribosomal subunit, possibly for assembly of the head region. Essential for efficient processing of 16S rRNA. May be needed both before and after RbfA during the maturation of 16S rRNA. It has affinity for free ribosomal 30S subunits but not for 70S ribosomes. This Rhizobium meliloti (strain 1021) (Ensifer meliloti) protein is Ribosome maturation factor RimM.